A 306-amino-acid chain; its full sequence is Ribosomal protein L11 methyltransferase (306 aa).

T152, G179, D201, and N243 together coordinate S-adenosyl-L-methionine.

This sequence belongs to the methyltransferase superfamily. PrmA family.

The protein localises to the cytoplasm. It catalyses the reaction L-lysyl-[protein] + 3 S-adenosyl-L-methionine = N(6),N(6),N(6)-trimethyl-L-lysyl-[protein] + 3 S-adenosyl-L-homocysteine + 3 H(+). Methylates ribosomal protein L11. The protein is Ribosomal protein L11 methyltransferase of Geobacter sp. (strain M21).